A 352-amino-acid polypeptide reads, in one-letter code: Chorismate synthase (352 aa).

Arg48 contacts NADP(+). FMN contacts are provided by residues 125–127 (RSS), 237–238 (NA), Gly278, 293–297 (KPTSS), and Arg319.

The protein belongs to the chorismate synthase family. Homotetramer. Requires FMNH2 as cofactor.

The catalysed reaction is 5-O-(1-carboxyvinyl)-3-phosphoshikimate = chorismate + phosphate. It participates in metabolic intermediate biosynthesis; chorismate biosynthesis; chorismate from D-erythrose 4-phosphate and phosphoenolpyruvate: step 7/7. Functionally, catalyzes the anti-1,4-elimination of the C-3 phosphate and the C-6 proR hydrogen from 5-enolpyruvylshikimate-3-phosphate (EPSP) to yield chorismate, which is the branch point compound that serves as the starting substrate for the three terminal pathways of aromatic amino acid biosynthesis. This reaction introduces a second double bond into the aromatic ring system. This chain is Chorismate synthase, found in Francisella tularensis subsp. tularensis (strain FSC 198).